The following is a 272-amino-acid chain: Short-chain dehydrogenase reductase ATA1 (272 aa).

14-38 (IITGGARGIGAATARLFTENGAYVI) is a binding site for NADP(+). S143 is a binding site for substrate. The active-site Proton acceptor is the Y156. K160 is an NADP(+) binding site.

Belongs to the short-chain dehydrogenases/reductases (SDR) family. As to expression, expressed specifically in tapetal cells.

Functionally, may play a role in tapetum development. In Arabidopsis thaliana (Mouse-ear cress), this protein is Short-chain dehydrogenase reductase ATA1.